The chain runs to 373 residues: Flagellar P-ring protein (373 aa).

Positions 1 to 30 (MTNRWSFDVKKNLVTLILTWLCLSISTAQA) are cleaved as a signal peptide.

This sequence belongs to the FlgI family. In terms of assembly, the basal body constitutes a major portion of the flagellar organelle and consists of four rings (L,P,S, and M) mounted on a central rod.

It is found in the periplasm. The protein resides in the bacterial flagellum basal body. Its function is as follows. Assembles around the rod to form the L-ring and probably protects the motor/basal body from shearing forces during rotation. The polypeptide is Flagellar P-ring protein (Aliivibrio salmonicida (strain LFI1238) (Vibrio salmonicida (strain LFI1238))).